Consider the following 720-residue polypeptide: MRFSIKMRASARVSSSPSTSDGSSGDHTESRDRADRHISGAERIVSASDIMQTVTELEHRAWTHSNGQPDDVVVSVHRVDEDEITHIPALTRETRHTHTVDDAHRTITEILRDAGIRTAEHALKALTRIRGMRGAMLLDADTGERRDTKDIRGVRVTALDNDMATGADAAEEMSSSAATKPYYCEALTLASKVQYHPAVCAELCISDDPDYTTGYVSTSGRYVRIENIKPMGSPQGGRVFLVRGTDDEIADCINYLENTAVIVHGIPWPPQDNHSAHRDEPDAFGAIPATDIATDLTTFAEQSLTAWENKGLRRYPLEFSSAPMPRTTVAGSDTLLFSSSNYLGLSEHPDVIAAATEALKHYGAGTGGSRLTTGNFTIHTSTERTLAEFTGYDDAVLFGTGYQANGAALATLATNIPEAPSTAPANTPGMTIFSDELNHASLIDGIRMATRGNAAVRIYPHKDTEHLENALAQCASPRKLIVSDGVFSMNGDIAPLPSIMRLARAHGSWVLIDDAHGTGTLGRTGRGIVEYWSDARRQDAGADSSPGEELPNDSDLQPDLLVVTASKALGSEGAAVCCSTPVAEFLRNRARGYVFSTSSAPASVAATQVAVATILREPERVHRLQDNSLYLRNQLREHGIPLVDGTSNSTPIIPIFIGDEADAVRISQGLSDRGFHVPGIRYPTVARGQAILRVTTMATHTRDDLDHLVDALRDLMPHSA.

The tract at residues 1 to 39 is disordered; sequence MRFSIKMRASARVSSSPSTSDGSSGDHTESRDRADRHIS. Residues 8–23 are compositionally biased toward low complexity; that stretch reads RASARVSSSPSTSDGS. Positions 24–39 are enriched in basic and acidic residues; sequence SGDHTESRDRADRHIS. Arginine 314 contributes to the substrate binding site. 401-402 lines the pyridoxal 5'-phosphate pocket; that stretch reads GY. Histidine 439 lines the substrate pocket. Pyridoxal 5'-phosphate contacts are provided by residues serine 488, 513–516, and 564–567; these read DDAH and TASK. Lysine 567 bears the N6-(pyridoxal phosphate)lysine mark. Threonine 684 contacts substrate.

It in the N-terminal section; belongs to the BioW family. This sequence in the C-terminal section; belongs to the class-II pyridoxal-phosphate-dependent aminotransferase family. BioF subfamily. In terms of assembly, homodimer. It depends on Mg(2+) as a cofactor. Pyridoxal 5'-phosphate serves as cofactor.

It catalyses the reaction heptanedioate + ATP + CoA = 6-carboxyhexanoyl-CoA + AMP + diphosphate. The enzyme catalyses 6-carboxyhexanoyl-[ACP] + L-alanine + H(+) = (8S)-8-amino-7-oxononanoate + holo-[ACP] + CO2. It functions in the pathway metabolic intermediate metabolism; pimeloyl-CoA biosynthesis; pimeloyl-CoA from pimelate: step 1/1. Its pathway is cofactor biosynthesis; biotin biosynthesis. Catalyzes both the decarboxylative condensation of pimeloyl-[acyl-carrier protein] and L-alanine to produce 8-amino-7-oxononanoate (AON), [acyl-carrier protein], and carbon dioxide, and the transformation of pimelate into pimeloyl-CoA with concomitant hydrolysis of ATP to AMP. This chain is Biotin biosynthesis bifunctional protein BioWF (bioWF), found in Corynebacterium kroppenstedtii (strain DSM 44385 / JCM 11950 / CIP 105744 / CCUG 35717).